Reading from the N-terminus, the 344-residue chain is Beta-1,4-galactosyltransferase 4 (344 aa).

Over 1 to 12 (MGFNLTFHLSYK) the chain is Cytoplasmic. A helical; Signal-anchor for type II membrane protein transmembrane segment spans residues 13–38 (FRLLLLLTLCLTVVGWATSNYFVGAI). The Lumenal segment spans residues 39–344 (QEIPKAKEFM…NITVDFWFGA (306 aa)). Cysteine 77 and cysteine 118 form a disulfide bridge. UDP-alpha-D-galactose contacts are provided by residues 129–133 (PHRNR), 168–170 (FNR), and 195–196 (VD). Cysteine 189 and cysteine 208 form a disulfide bridge. Aspartate 196 contacts Mn(2+). Residue asparagine 220 is glycosylated (N-linked (GlcNAc...) asparagine). UDP-alpha-D-galactose is bound by residues tyrosine 224 and tryptophan 256. Position 258–261 (258–261 (GEDD)) interacts with N-acetyl-D-glucosamine. Histidine 289 is a Mn(2+) binding site. 289-291 (HTR) provides a ligand contact to UDP-alpha-D-galactose. Arginine 301 provides a ligand contact to N-acetyl-D-glucosamine. Asparagine 335 is a glycosylation site (N-linked (GlcNAc...) asparagine).

It belongs to the glycosyltransferase 7 family. Interacts with SLC35A2 (isoform 2; UGT1). The cofactor is Mn(2+). In terms of processing, N-glycosylated. In terms of tissue distribution, highest expression is observed in placenta, pancreas, kidney and heart. Expressed in corneal epithelial cells.

It localises to the golgi apparatus membrane. The protein resides in the secreted. It catalyses the reaction N-acetyl-D-glucosamine + UDP-alpha-D-galactose = beta-D-galactosyl-(1-&gt;4)-N-acetyl-D-glucosamine + UDP + H(+). It carries out the reaction a beta-D-GlcNAc-(1-&gt;3)-beta-D-Gal-(1-&gt;4)-beta-D-Glc-(1&lt;-&gt;1)-Cer(d18:1(4E)) + UDP-alpha-D-galactose = a neolactoside nLc4Cer(d18:1(4E)) + UDP + H(+). The catalysed reaction is 3-O-{beta-D-galactosyl-(1-&gt;3)-[6-O-sulfo-N-acetyl-beta-D-glucosaminyl-(1-&gt;6)]-N-acetyl-alpha-D-galactosaminyl}-L-seryl-[protein] + UDP-alpha-D-galactose = 3-O-{beta-D-galactosyl-(1-&gt;3)-[beta-D-galactosyl-(1-&gt;4)-6-O-sulfo-N-acetyl-beta-D-glucosaminyl-(1-&gt;6)]-N-acetyl-alpha-D-galactosaminyl}-L-seryl-[protein] + UDP + H(+). The enzyme catalyses 3-O-{beta-D-galactosyl-(1-&gt;3)-[6-O-sulfo-N-acetyl-beta-D-glucosaminyl-(1-&gt;6)]-N-acetyl-alpha-D-galactosaminyl}-L-threonyl-[protein] + UDP-alpha-D-galactose = 3-O-{beta-D-galactosyl-(1-&gt;3)-[beta-D-galactosyl-(1-&gt;4)-6-O-sulfo-N-acetyl-beta-D-glucosaminyl-(1-&gt;6)]-N-acetyl-alpha-D-galactosaminyl}-L-threonyl-[protein] + UDP + H(+). It functions in the pathway protein modification; protein glycosylation. Its pathway is glycolipid biosynthesis. Its activity is regulated as follows. Up-regulated by LALBA. Galactose (Gal) transferase involved in the synthesis of terminal N-acetyllactosamine (LacNac) unit present on glycan chains of glycoproteins and glycosphingolipids. Catalyzes the transfer of Gal residue via a beta1-&gt;4 linkage from UDP-Gal to the non-reducing terminal N-acetyl glucosamine 6-O-sulfate (6-O-sulfoGlcNAc) in the linearly growing chain of both N- and O-linked keratan sulfate proteoglycans. Cooperates with B3GNT7 N-acetyl glucosamine transferase and CHST6 and CHST1 sulfotransferases to construct and elongate mono- and disulfated disaccharide units [-&gt;3Galbeta1-&gt;4(6-sulfoGlcNAcbeta)1-&gt;] and [-&gt;3(6-sulfoGalbeta)1-&gt;4(6-sulfoGlcNAcbeta)1-&gt;] within keratan sulfate polymer. Transfers Gal residue via a beta1-&gt;4 linkage to terminal 6-O-sulfoGlcNAc within the LacNac unit of core 2 O-glycans forming 6-sulfo-sialyl-Lewis X (sLex). May contribute to the generation of sLex epitope on mucin-type glycoproteins that serve as ligands for SELL/L-selectin, a major regulator of leukocyte migration. In the biosynthesis pathway of neolacto-series glycosphingolipids, transfers Gal residue via a beta1-&gt;4 linkage to terminal GlcNAc of a lactotriaosylceramide (Lc3Cer) acceptor to form a neolactotetraosylceramide. The chain is Beta-1,4-galactosyltransferase 4 from Homo sapiens (Human).